The following is a 364-amino-acid chain: Dihydroorotate dehydrogenase (quinone) (364 aa).

Residues 62 to 66 (AGFDK) and Thr86 each bind FMN. Residue Lys66 participates in substrate binding. Residue 111–115 (NRMGF) coordinates substrate. FMN is bound by residues Asn142 and Asn175. Residue Asn175 coordinates substrate. The active-site Nucleophile is Ser178. Asn180 lines the substrate pocket. 2 residues coordinate FMN: Lys216 and Thr244. 245-246 (NT) is a binding site for substrate. FMN contacts are provided by residues Gly267, Gly296, and 317-318 (YT).

Belongs to the dihydroorotate dehydrogenase family. Type 2 subfamily. Monomer. The cofactor is FMN.

It localises to the cell membrane. It catalyses the reaction (S)-dihydroorotate + a quinone = orotate + a quinol. Its pathway is pyrimidine metabolism; UMP biosynthesis via de novo pathway; orotate from (S)-dihydroorotate (quinone route): step 1/1. Catalyzes the conversion of dihydroorotate to orotate with quinone as electron acceptor. The polypeptide is Dihydroorotate dehydrogenase (quinone) (Anaeromyxobacter dehalogenans (strain 2CP-C)).